The following is a 355-amino-acid chain: uncharacterized protein (355 aa).

An N-terminal signal peptide occupies residues 1–27 (MESPIRTARRTLPLLIGATCLVLALTG). A lipid anchor (N-palmitoyl cysteine) is attached at Cys-28. The S-diacylglycerol cysteine moiety is linked to residue Cys-28. The disordered stretch occupies residues 33–53 (GPAQARPTPSASTSPKQAPAL). The segment covering 39–48 (PTPSASTSPK) has biased composition (polar residues).

Its subcellular location is the cell membrane. This is an uncharacterized protein from Streptomyces coelicolor (strain ATCC BAA-471 / A3(2) / M145).